We begin with the raw amino-acid sequence, 843 residues long: Aminopeptidase N (843 aa).

Residues Glu120 and 252 to 256 (GAMEN) each bind substrate. Residue His288 coordinates Zn(2+). Glu289 acts as the Proton acceptor in catalysis. His292 and Glu311 together coordinate Zn(2+).

The protein belongs to the peptidase M1 family. In terms of assembly, monomer. It depends on Zn(2+) as a cofactor.

It localises to the cytoplasm. The catalysed reaction is Release of an N-terminal amino acid, Xaa-|-Yaa- from a peptide, amide or arylamide. Xaa is preferably Ala, but may be most amino acids including Pro (slow action). When a terminal hydrophobic residue is followed by a prolyl residue, the two may be released as an intact Xaa-Pro dipeptide.. Its function is as follows. Aminopeptidase with broad substrate specificity to several peptides. This chain is Aminopeptidase N (pepN), found in Lactobacillus delbrueckii subsp. lactis.